Consider the following 475-residue polypeptide: Ribulose bisphosphate carboxylase large chain (475 aa).

Residues 1–2 (MS) constitute a propeptide that is removed on maturation. Residue proline 3 is modified to N-acetylproline. Lysine 14 carries the N6,N6,N6-trimethyllysine modification. Positions 123 and 173 each coordinate substrate. Lysine 175 functions as the Proton acceptor in the catalytic mechanism. Lysine 177 contacts substrate. 3 residues coordinate Mg(2+): lysine 201, aspartate 203, and glutamate 204. Lysine 201 is subject to N6-carboxylysine. The Proton acceptor role is filled by histidine 294. Residues arginine 295, histidine 327, and serine 379 each contribute to the substrate site.

The protein belongs to the RuBisCO large chain family. Type I subfamily. In terms of assembly, heterohexadecamer of 8 large chains and 8 small chains; disulfide-linked. The disulfide link is formed within the large subunit homodimers. The cofactor is Mg(2+). The disulfide bond which can form in the large chain dimeric partners within the hexadecamer appears to be associated with oxidative stress and protein turnover.

Its subcellular location is the plastid. It localises to the chloroplast. The catalysed reaction is 2 (2R)-3-phosphoglycerate + 2 H(+) = D-ribulose 1,5-bisphosphate + CO2 + H2O. The enzyme catalyses D-ribulose 1,5-bisphosphate + O2 = 2-phosphoglycolate + (2R)-3-phosphoglycerate + 2 H(+). RuBisCO catalyzes two reactions: the carboxylation of D-ribulose 1,5-bisphosphate, the primary event in carbon dioxide fixation, as well as the oxidative fragmentation of the pentose substrate in the photorespiration process. Both reactions occur simultaneously and in competition at the same active site. The protein is Ribulose bisphosphate carboxylase large chain of Ostrya virginiana (American hophornbeam).